Here is a 520-residue protein sequence, read N- to C-terminus: Probable E3 ubiquitin-protein ligase rbrA (520 aa).

The segment covering 1–42 (MTDDEMYEDYDVDDDSAEESGNESLDDTEYDDAATQEFDFDE) has biased composition (acidic residues). Residues 1-51 (MTDDEMYEDYDVDDDSAEESGNESLDDTEYDDAATQEFDFDENQPQRSLGK) form a disordered region. Positions 135-354 (GNVSCLICLE…GGYYNCNKYD (220 aa)) are TRIAD supradomain. Positions 139, 142, 156, 158, 161, 164, 184, 189, 228, 233, 250, 252, 257, 260, 268, 273, 300, and 303 each coordinate Zn(2+). Residues 139–189 (CLICLEDYPPTQTFALICNHRYCLPCYKNYLEIKVSEGPECIYTPCPAPKC) form an RING-type 1 zinc finger. The IBR-type zinc-finger motif lies at 208–273 (ERFNNFILKS…EIGDHMPCPC (66 aa)). An RING-type 2; atypical zinc finger spans residues 300–333 (CPECRSPIEKNGGCMHMTCRKNAGGCGFEFCWLC). Residue C313 is part of the active site. C318, C325, C330, C333, H340, and C350 together coordinate Zn(2+).

This sequence belongs to the RBR family.

The catalysed reaction is [E2 ubiquitin-conjugating enzyme]-S-ubiquitinyl-L-cysteine + [acceptor protein]-L-lysine = [E2 ubiquitin-conjugating enzyme]-L-cysteine + [acceptor protein]-N(6)-ubiquitinyl-L-lysine.. It functions in the pathway protein modification; protein ubiquitination. Its function is as follows. Might act as an E3 ubiquitin-protein ligase. Appears to be required for normal cell-type proportioning and cell sorting during multicellular development. In addition to being necessary for a normal percentage of prestalk cells and the organization of the slug, rbrA is also necessary for spore cell viability. The polypeptide is Probable E3 ubiquitin-protein ligase rbrA (rbrA) (Dictyostelium discoideum (Social amoeba)).